Reading from the N-terminus, the 350-residue chain is Biotin synthase (350 aa).

The Radical SAM core domain maps to 38–256 (NYVQVSTLLS…IAVARIMMPE (219 aa)). Residues C53, C57, and C60 each coordinate [4Fe-4S] cluster. [2Fe-2S] cluster is bound by residues C97, C128, C188, and R260.

It belongs to the radical SAM superfamily. Biotin synthase family. In terms of assembly, homodimer. The cofactor is [4Fe-4S] cluster. It depends on [2Fe-2S] cluster as a cofactor.

It catalyses the reaction (4R,5S)-dethiobiotin + (sulfur carrier)-SH + 2 reduced [2Fe-2S]-[ferredoxin] + 2 S-adenosyl-L-methionine = (sulfur carrier)-H + biotin + 2 5'-deoxyadenosine + 2 L-methionine + 2 oxidized [2Fe-2S]-[ferredoxin]. It participates in cofactor biosynthesis; biotin biosynthesis; biotin from 7,8-diaminononanoate: step 2/2. Catalyzes the conversion of dethiobiotin (DTB) to biotin by the insertion of a sulfur atom into dethiobiotin via a radical-based mechanism. The protein is Biotin synthase of Aliivibrio salmonicida (strain LFI1238) (Vibrio salmonicida (strain LFI1238)).